The chain runs to 76 residues: Sec-independent protein translocase protein TatA (76 aa).

The helical transmembrane segment at 1–21 (MGSFSIWHWLIVLAVVLLLFG) threads the bilayer. Positions 43–76 (MSDEDAKDDARDSGRTIDAKADETVNDVKKTTKS) are disordered. Positions 50-76 (DDARDSGRTIDAKADETVNDVKKTTKS) are enriched in basic and acidic residues.

This sequence belongs to the TatA/E family. In terms of assembly, the Tat system comprises two distinct complexes: a TatABC complex, containing multiple copies of TatA, TatB and TatC subunits, and a separate TatA complex, containing only TatA subunits. Substrates initially bind to the TatABC complex, which probably triggers association of the separate TatA complex to form the active translocon.

It localises to the cell inner membrane. Functionally, part of the twin-arginine translocation (Tat) system that transports large folded proteins containing a characteristic twin-arginine motif in their signal peptide across membranes. TatA could form the protein-conducting channel of the Tat system. This is Sec-independent protein translocase protein TatA from Brucella anthropi (strain ATCC 49188 / DSM 6882 / CCUG 24695 / JCM 21032 / LMG 3331 / NBRC 15819 / NCTC 12168 / Alc 37) (Ochrobactrum anthropi).